The primary structure comprises 370 residues: Seipin (370 aa).

The N-terminal stretch at Met1–Gly18 is a signal peptide. The Cytoplasmic segment spans residues Arg19–Leu55. A helical transmembrane segment spans residues Gly56–Phe76. Residues Tyr77 to Pro251 are Lumenal-facing. A helical transmembrane segment spans residues Val252 to Leu272. Residues Ser273–His370 are Cytoplasmic-facing. Positions Lys346–His370 are disordered. The segment covering Gly350–Arg359 has biased composition (basic and acidic residues).

In terms of tissue distribution, widely expressed, with highest levels detected in fat body, moderate levels detected in salivary gland, midgut and muscle, and weak expression detected in brain.

The protein localises to the endoplasmic reticulum membrane. Its subcellular location is the lipid droplet. Its function is as follows. Acts as a tissue-autonomous lipid modulator, preventing ectopic lipid accumulation in salivary gland (a non-adipose tissue) and in promoting lipid storage in fat tissue. Required for the growth and maturation of small nascent lipid droplets (LDs) into larger mature LDs. The sequence is that of Seipin from Drosophila melanogaster (Fruit fly).